Reading from the N-terminus, the 496-residue chain is Lysine--tRNA ligase (496 aa).

2 residues coordinate Mg(2+): Glu-409 and Glu-416.

Belongs to the class-II aminoacyl-tRNA synthetase family. In terms of assembly, homodimer. Mg(2+) serves as cofactor.

The protein resides in the cytoplasm. The enzyme catalyses tRNA(Lys) + L-lysine + ATP = L-lysyl-tRNA(Lys) + AMP + diphosphate. This Streptococcus gordonii (strain Challis / ATCC 35105 / BCRC 15272 / CH1 / DL1 / V288) protein is Lysine--tRNA ligase.